A 222-amino-acid chain; its full sequence is Cytidylate kinase (222 aa).

An ATP-binding site is contributed by 7–15; that stretch reads GPAGAGKST.

It belongs to the cytidylate kinase family. Type 1 subfamily.

Its subcellular location is the cytoplasm. It catalyses the reaction CMP + ATP = CDP + ADP. The enzyme catalyses dCMP + ATP = dCDP + ADP. This is Cytidylate kinase from Carboxydothermus hydrogenoformans (strain ATCC BAA-161 / DSM 6008 / Z-2901).